The sequence spans 177 residues: Putative pre-16S rRNA nuclease (177 aa).

A disordered region spans residues 1 to 20; that stretch reads MVATQQGPDRPGIDDPGRGR.

This sequence belongs to the YqgF nuclease family.

The protein resides in the cytoplasm. Functionally, could be a nuclease involved in processing of the 5'-end of pre-16S rRNA. This chain is Putative pre-16S rRNA nuclease, found in Rhodococcus erythropolis (strain PR4 / NBRC 100887).